The following is a 328-amino-acid chain: Cell division protein ZipA (328 aa).

Topologically, residues 1–4 (MDLN) are periplasmic. A helical transmembrane segment spans residues 5 to 25 (TILIIVGIVALVALIVHGLWS). The Cytoplasmic portion of the chain corresponds to 26 to 328 (NRREKSKYFD…NAEQAYLARV (303 aa)). Positions 43–82 (TSLTSRSHTQEEMAQPNNISPNTYVENGHTPIPQPTTEKV) are disordered. Polar residues predominate over residues 57–67 (QPNNISPNTYV).

It belongs to the ZipA family. As to quaternary structure, interacts with FtsZ via their C-terminal domains.

The protein resides in the cell inner membrane. Functionally, essential cell division protein that stabilizes the FtsZ protofilaments by cross-linking them and that serves as a cytoplasmic membrane anchor for the Z ring. Also required for the recruitment to the septal ring of downstream cell division proteins. In Haemophilus influenzae (strain PittEE), this protein is Cell division protein ZipA.